Reading from the N-terminus, the 378-residue chain is tRNA-specific 2-thiouridylase MnmA (378 aa).

ATP is bound by residues 7–14 and methionine 33; that span reads GLSGGVDS. Residues 102–104 form an interaction with target base in tRNA region; that stretch reads NPD. The active-site Nucleophile is cysteine 107. Cysteine 107 and cysteine 209 are joined by a disulfide. Residue glycine 132 coordinates ATP. The interval 159–161 is interaction with tRNA; it reads KDQ. Cysteine 209 serves as the catalytic Cysteine persulfide intermediate. Residues 316-317 form an interaction with tRNA region; sequence RY.

This sequence belongs to the MnmA/TRMU family.

The protein localises to the cytoplasm. The enzyme catalyses S-sulfanyl-L-cysteinyl-[protein] + uridine(34) in tRNA + AH2 + ATP = 2-thiouridine(34) in tRNA + L-cysteinyl-[protein] + A + AMP + diphosphate + H(+). Its function is as follows. Catalyzes the 2-thiolation of uridine at the wobble position (U34) of tRNA, leading to the formation of s(2)U34. This Onion yellows phytoplasma (strain OY-M) protein is tRNA-specific 2-thiouridylase MnmA.